We begin with the raw amino-acid sequence, 426 residues long: Putative acid phosphatase 1 (426 aa).

The N-terminal stretch at 1 to 18 (MRVLFYVSILVIIASVHT) is a signal peptide. Residues 19-388 (QLISVHVIFR…SEWVMTPLSW (370 aa)) lie on the Extracellular side of the membrane. H29 serves as the catalytic Nucleophile. N-linked (GlcNAc...) asparagine glycans are attached at residues N37 and N145. C133 and C369 form a disulfide bridge. D276 serves as the catalytic Proton donor. The helical transmembrane segment at 389-409 (IIVAIAILLLIALILMTYFVI) threads the bilayer. The Cytoplasmic segment spans residues 410–426 (RYKNRSIVNIKKLSLEN).

It belongs to the histidine acid phosphatase family.

The protein localises to the membrane. The catalysed reaction is a phosphate monoester + H2O = an alcohol + phosphate. The protein is Putative acid phosphatase 1 of Caenorhabditis elegans.